The following is a 115-amino-acid chain: NADH-ubiquinone oxidoreductase chain 3 (115 aa).

Helical transmembrane passes span F3–W23, F55–L75, and L84–Y104.

This sequence belongs to the complex I subunit 3 family. In terms of assembly, core subunit of respiratory chain NADH dehydrogenase (Complex I) which is composed of 45 different subunits. Interacts with TMEM186. Interacts with TMEM242.

The protein localises to the mitochondrion inner membrane. The catalysed reaction is a ubiquinone + NADH + 5 H(+)(in) = a ubiquinol + NAD(+) + 4 H(+)(out). In terms of biological role, core subunit of the mitochondrial membrane respiratory chain NADH dehydrogenase (Complex I) which catalyzes electron transfer from NADH through the respiratory chain, using ubiquinone as an electron acceptor. Essential for the catalytic activity of complex I. The polypeptide is NADH-ubiquinone oxidoreductase chain 3 (Homo sapiens (Human)).